The sequence spans 138 residues: NADPH-dependent 7-cyano-7-deazaguanine reductase (138 aa).

Catalysis depends on cysteine 53, which acts as the Thioimide intermediate. Aspartate 60 (proton donor) is an active-site residue. Substrate contacts are provided by residues 75–77 (VEL) and 94–95 (HE).

This sequence belongs to the GTP cyclohydrolase I family. QueF type 1 subfamily.

Its subcellular location is the cytoplasm. The enzyme catalyses 7-aminomethyl-7-carbaguanine + 2 NADP(+) = 7-cyano-7-deazaguanine + 2 NADPH + 3 H(+). It functions in the pathway tRNA modification; tRNA-queuosine biosynthesis. Functionally, catalyzes the NADPH-dependent reduction of 7-cyano-7-deazaguanine (preQ0) to 7-aminomethyl-7-deazaguanine (preQ1). The sequence is that of NADPH-dependent 7-cyano-7-deazaguanine reductase from Gloeothece citriformis (strain PCC 7424) (Cyanothece sp. (strain PCC 7424)).